The primary structure comprises 495 residues: Aspartyl/glutamyl-tRNA(Asn/Gln) amidotransferase subunit B (495 aa).

The protein belongs to the GatB/GatE family. GatB subfamily. As to quaternary structure, heterotrimer of A, B and C subunits.

The enzyme catalyses L-glutamyl-tRNA(Gln) + L-glutamine + ATP + H2O = L-glutaminyl-tRNA(Gln) + L-glutamate + ADP + phosphate + H(+). It carries out the reaction L-aspartyl-tRNA(Asn) + L-glutamine + ATP + H2O = L-asparaginyl-tRNA(Asn) + L-glutamate + ADP + phosphate + 2 H(+). In terms of biological role, allows the formation of correctly charged Asn-tRNA(Asn) or Gln-tRNA(Gln) through the transamidation of misacylated Asp-tRNA(Asn) or Glu-tRNA(Gln) in organisms which lack either or both of asparaginyl-tRNA or glutaminyl-tRNA synthetases. The reaction takes place in the presence of glutamine and ATP through an activated phospho-Asp-tRNA(Asn) or phospho-Glu-tRNA(Gln). The chain is Aspartyl/glutamyl-tRNA(Asn/Gln) amidotransferase subunit B from Methanosarcina acetivorans (strain ATCC 35395 / DSM 2834 / JCM 12185 / C2A).